A 512-amino-acid chain; its full sequence is Putative UDP-glucuronosyltransferase ugt-55 (512 aa).

An N-terminal signal peptide occupies residues 1 to 22 (MQLLTLPTLIFIFLNYGTPCLS). A helical membrane pass occupies residues 487 to 507 (ILLYLDSIAMFTLTLLTMILI).

This sequence belongs to the UDP-glycosyltransferase family.

It is found in the membrane. The enzyme catalyses glucuronate acceptor + UDP-alpha-D-glucuronate = acceptor beta-D-glucuronoside + UDP + H(+). In Caenorhabditis elegans, this protein is Putative UDP-glucuronosyltransferase ugt-55 (ugt-55).